We begin with the raw amino-acid sequence, 338 residues long: Anthranilate phosphoribosyltransferase (338 aa).

Residues Gly78, 81-82 (GD), Thr86, 88-91 (NIST), 106-114 (KHGNRSVSS), and Ser118 each bind 5-phospho-alpha-D-ribose 1-diphosphate. Gly78 is a binding site for anthranilate. Mg(2+) is bound at residue Ser90. Residue Asn109 coordinates anthranilate. Residue Arg164 coordinates anthranilate. Residues Asp223 and Glu224 each contribute to the Mg(2+) site.

The protein belongs to the anthranilate phosphoribosyltransferase family. In terms of assembly, homodimer. The cofactor is Mg(2+).

The enzyme catalyses N-(5-phospho-beta-D-ribosyl)anthranilate + diphosphate = 5-phospho-alpha-D-ribose 1-diphosphate + anthranilate. The protein operates within amino-acid biosynthesis; L-tryptophan biosynthesis; L-tryptophan from chorismate: step 2/5. Its function is as follows. Catalyzes the transfer of the phosphoribosyl group of 5-phosphorylribose-1-pyrophosphate (PRPP) to anthranilate to yield N-(5'-phosphoribosyl)-anthranilate (PRA). This is Anthranilate phosphoribosyltransferase from Bacillus subtilis (strain 168).